The sequence spans 185 residues: MRYWSIRDEDVIDLVKRRYNVTISADQIAKARGFEFRISWKKAIETARAIRFLTIKQAEDYMEKVKDLKAPIPIKEFTRKQAHHNVPWDGWPVAKWPVKVADSFLQVLRNLESNASYRGLNIDNTVIVHASASRGMRIRNYMPRALGRATPWFQDTVNIELVAVELPAELVPKKFSWARVLKAIK.

This sequence belongs to the universal ribosomal protein uL22 family. As to quaternary structure, part of the 50S ribosomal subunit.

Its function is as follows. This protein binds specifically to 23S rRNA. It makes multiple contacts with different domains of the 23S rRNA in the assembled 50S subunit and ribosome. Functionally, the globular domain of the protein is located near the polypeptide exit tunnel on the outside of the subunit, while an extended beta-hairpin is found that lines the wall of the exit tunnel in the center of the 70S ribosome. This chain is Large ribosomal subunit protein uL22, found in Caldivirga maquilingensis (strain ATCC 700844 / DSM 13496 / JCM 10307 / IC-167).